The chain runs to 224 residues: ATP-dependent dethiobiotin synthetase BioD (224 aa).

Residue T18 coordinates Mg(2+). K39 is an active-site residue. Substrate is bound at residue S43. Positions 56 and 117 each coordinate Mg(2+). Residues D56, 117–120 (EGVG), and 177–178 (NE) each bind ATP.

It belongs to the dethiobiotin synthetase family. Homodimer. The cofactor is Mg(2+).

It is found in the cytoplasm. It catalyses the reaction (7R,8S)-7,8-diammoniononanoate + CO2 + ATP = (4R,5S)-dethiobiotin + ADP + phosphate + 3 H(+). Its pathway is cofactor biosynthesis; biotin biosynthesis; biotin from 7,8-diaminononanoate: step 1/2. Its function is as follows. Catalyzes a mechanistically unusual reaction, the ATP-dependent insertion of CO2 between the N7 and N8 nitrogen atoms of 7,8-diaminopelargonic acid (DAPA, also called 7,8-diammoniononanoate) to form a ureido ring. The sequence is that of ATP-dependent dethiobiotin synthetase BioD from Xanthomonas axonopodis pv. citri (strain 306).